Consider the following 1299-residue polypeptide: MAANRHGGHLPLPEGLAAPTHRTVIYYAKCDFSPSEERCVNRFTGRPGPLTLMRDRSNVEHMVLITVKTDEEDRNTAEQNQARARSRSQETKKILTLLAPQIDYNPLTLDSLDHNLGQRAVIFSYGPNLHQRLTTSALELQRACKTLKLHSILRIESGRHFTSKAVQYVVENEDDILTAALIGENNLYQINTETLSATRLVTDALSWAEYKPLDVTCNAVMKPPREGVQPMCLVASSPVSDYNFNKYLMITPSCTAISLHMGHPYPRVSQGIFHVHSSTRTMGRQCCDYLFHSSLLPNGNTTAFACGYYVTSTTGSGSIPTSVNEQILHAASAQGRSLNNLGVPVVSGFLKPLPRCSEVPNNVITHVSQLRTASERDLNLCRVRAGQFVAAVGAYDPTSGPDKSPYLYRDSIDSLNRAIQATKLFYQMCETPCVSSYQREFGSCSTLHHLLALVSPKGMTVHISRLPEEITKALRSVPVLEEDTVCAFVSGYFFNCFSSQLFLVIDDKVKTTPSGQIHFTDILKKAGNLCGAPVYILGRTCNDIGIHCVNDLYHPRDLSVLDSQATSSMTLTVQPHASVVSATLQPQEPHEEDESIDWAMFGTSSTISNILSHPAVASKSNIIRRLDRCGNGLIAQQPGIGPSDAPVSDYAIICDSSMFPARLENDAQSIKKISKQEAQRAYAQIHKWFGTEKLFLNTISAKVIALGEQAYKLSRNPIVGVKYAIAEAITNIMFGPDCVLEDITLTVAAHWNKQETAALYRVLFACKEMCRELNVNLSITDASDSRDTPIQDTDAANTVVVTASARVTSIERITPALKKAENALVHVCLSKELTLSGSVFENSFTAFSSHLPDLDTSKLRDMFYAVKHLISKNLVVAGHDISDGGLITTAAEMCFASTFGVTVNLPSALPALMYLVSETPGALLEVPKEHLSTVTTLLSERGLTWYAVGTVNNVKNLSIYDNGTHLLTESINILNSKWMSYAEESFETCEPHIESMYRNDYGNNAMDLKHLEDLCTHKPLQLYTCPSHPVSVAVLTFPGCPDPVATLQAFANVGFLSYPISTEFLLQGNNLNAFSCLAVSGSSAFEEEGTGTRIAIYTLLQCDLAKNCLKEFFQRPDTLSLCCGELGTQLLAACQVVGDTHPSRGDISSNPESWTLELEPNASKHYESLWLNFHVPQTTKSIILQALRGTIFQDGLWQVLGLRYKHDAQEYIMQQNGTIAMSYHSAKINPYLYAMHYPRNPSGNSSVAGICSKNGRHLALLVEPALSFHTWQWQHIPKPLVTSPWALMYQCMFLWCVKE.

The protein resides in the virion tegument. The sequence is that of Probable membrane antigen 75 (75) from Saimiriine herpesvirus 2 (strain 11) (SaHV-2).